The chain runs to 426 residues: Serine--tRNA ligase (426 aa).

Residue 233–235 (TAE) coordinates L-serine. Residue 264 to 266 (RSE) participates in ATP binding. Residue Glu-287 coordinates L-serine. Residue 351 to 354 (EISS) coordinates ATP. Position 387 (Ser-387) interacts with L-serine.

This sequence belongs to the class-II aminoacyl-tRNA synthetase family. Type-1 seryl-tRNA synthetase subfamily. Homodimer. The tRNA molecule binds across the dimer.

It is found in the cytoplasm. It catalyses the reaction tRNA(Ser) + L-serine + ATP = L-seryl-tRNA(Ser) + AMP + diphosphate + H(+). The enzyme catalyses tRNA(Sec) + L-serine + ATP = L-seryl-tRNA(Sec) + AMP + diphosphate + H(+). It participates in aminoacyl-tRNA biosynthesis; selenocysteinyl-tRNA(Sec) biosynthesis; L-seryl-tRNA(Sec) from L-serine and tRNA(Sec): step 1/1. Catalyzes the attachment of serine to tRNA(Ser). Is also able to aminoacylate tRNA(Sec) with serine, to form the misacylated tRNA L-seryl-tRNA(Sec), which will be further converted into selenocysteinyl-tRNA(Sec). This is Serine--tRNA ligase from Pseudomonas fluorescens (strain Pf0-1).